Reading from the N-terminus, the 447-residue chain is Rab GDP dissociation inhibitor alpha (447 aa).

This sequence belongs to the Rab GDI family. Interacts with RHOH. Interacts with the non-phosphorylated forms of RAB1A, RAB3A, RAB5A, RAB5B, RAB5C, RAB8A, RAB8B, RAB10, RAB12, RAB35, and RAB43.

Its subcellular location is the cytoplasm. It localises to the golgi apparatus. It is found in the trans-Golgi network. Its function is as follows. Regulates the GDP/GTP exchange reaction of most Rab proteins by inhibiting the dissociation of GDP from them, and the subsequent binding of GTP to them. Promotes the dissociation of GDP-bound Rab proteins from the membrane and inhibits their activation. Promotes the dissociation of RAB1A, RAB3A, RAB5A and RAB10 from membranes. This Macaca fascicularis (Crab-eating macaque) protein is Rab GDP dissociation inhibitor alpha (GDI1).